A 123-amino-acid polypeptide reads, in one-letter code: Probable U6 snRNA-associated Sm-like protein LSm4 (123 aa).

The Sm domain occupies 3-76 (LPLSLLKTAQ…IKYLRIPETV (74 aa)). The segment covering 85-97 (NEVRRQQQREQSR) has biased composition (basic and acidic residues). Residues 85–123 (NEVRRQQQREQSRGRGGGRGGRGGHRGGGGNRGGRGGAR) are disordered. The segment covering 98–123 (GRGGGRGGRGGHRGGGGNRGGRGGAR) has biased composition (gly residues).

The protein belongs to the snRNP Sm proteins family. In terms of assembly, component of the precatalytic spliceosome (spliceosome B complex). Component of the U4/U6-U5 tri-snRNP complex, a building block of the precatalytic spliceosome (spliceosome B complex). LSM2, LSM3, LSM4, LSM5, LSM6, LSM7 and LSM8 form a heptameric, ring-shaped subcomplex (the LSM2-8 complex) that is part of the U4/U6-U5 tri-snRNP complex and the precatalytic spliceosome.

It is found in the nucleus. Its function is as follows. Plays a role in pre-mRNA splicing as component of the U4/U6-U5 tri-snRNP complex that is involved in spliceosome assembly, and as component of the precatalytic spliceosome (spliceosome B complex). The heptameric LSM2-8 complex binds specifically to the 3'-terminal U-tract of U6 snRNA. The polypeptide is Probable U6 snRNA-associated Sm-like protein LSm4 (lsm-4) (Caenorhabditis elegans).